Consider the following 345-residue polypeptide: Serpentine receptor class beta-13 (345 aa).

Residues 1 to 22 lie on the Extracellular side of the membrane; that stretch reads MAGINQTKCDLGFQITFNTVYR. N-linked (GlcNAc...) asparagine glycosylation occurs at N5. A helical transmembrane segment spans residues 23–43; the sequence is FSQFYTFSVSSFAVPGLIYFM. Topologically, residues 44–58 are cytoplasmic; that stretch reads FKRLFQLYFHGNLKT. Residues 59 to 79 traverse the membrane as a helical segment; sequence LLIAYFISILLYAVMLCFAFG. Residues 80–103 are Extracellular-facing; that stretch reads YQFFVPFFIKSNCDLIINKTLFKY. N-linked (GlcNAc...) asparagine glycosylation is present at N97. The helical transmembrane segment at 104-124 threads the bilayer; that stretch reads IHTSVIFLLTTPMMFPLGFSI. At 125-142 the chain is on the cytoplasmic side; that stretch reads ERFTAMAMASRYENIRTL. The helical transmembrane segment at 143 to 163 threads the bilayer; it reads IGPVLVIFLIIPNCIIFYFLF. Residues 164–189 are Extracellular-facing; the sequence is QHETYDDTFISFLMLPNTTAVNFNTY. N180 is a glycosylation site (N-linked (GlcNAc...) asparagine). A helical transmembrane segment spans residues 190 to 210; the sequence is LWFLLYLNIGNLALNVLLLLV. The Cytoplasmic portion of the chain corresponds to 211–241; it reads HRKFKRRLLLHKTSLSTRYAIEEISQSSKFT. The helical transmembrane segment at 242-262 threads the bilayer; sequence LIITFTHLLFFGCNTICSILV. Residues 263–280 are Extracellular-facing; the sequence is RVLGEPFFGSFINHSVAR. N-linked (GlcNAc...) asparagine glycosylation occurs at N275. Residues 281 to 301 form a helical membrane-spanning segment; that stretch reads GVNCAVPTYNLVIVVVGFVSL. The Cytoplasmic portion of the chain corresponds to 302 to 345; it reads SKLNSRRQQEVQTTVQLKTTGKEGARNYDNITANQWATITQIGF.

The protein belongs to the nematode receptor-like protein srb family. In terms of tissue distribution, expressed in the head sensory neurons ASI, ASK and AWB. Not expressed in male somatic gonads or sperm.

It localises to the cell membrane. The protein resides in the perikaryon. The protein localises to the cell projection. It is found in the dendrite. In terms of biological role, G-protein coupled receptor that antagonizes the negative effects of the gcy-35 oxygen sensor on spermatogenesis. This leads to the maintenance of mitochondrial function in developing spermatocytes and/or spermatids prior to testis maturation during the early larval stages. Regulates the navigational capacity of sperm during hyperoxic conditions ensuring the proper targeting of sperm derived from males to the fertilization site in the uterus of hermaphrodites. May act in the same signaling pathway as the neuropeptide flp-21. The chain is Serpentine receptor class beta-13 from Caenorhabditis elegans.